The following is a 346-amino-acid chain: Holliday junction branch migration complex subunit RuvB (346 aa).

A large ATPase domain (RuvB-L) region spans residues 1-182 (MSERLVTSNE…FGVLCSMEYY (182 aa)). Residues Leu-21, Arg-22, Gly-63, Lys-66, Thr-67, Thr-68, 129 to 131 (EDY), Arg-172, Tyr-182, and Arg-219 each bind ATP. Thr-67 provides a ligand contact to Mg(2+). A small ATPAse domain (RuvB-S) region spans residues 183-253 (TDEQLKEIII…AAKKSLEILE (71 aa)). The interval 256 to 346 (GEGFDRIDNK…DSKQCTLFEK (91 aa)) is head domain (RuvB-H). DNA-binding residues include Arg-311 and Arg-316.

It belongs to the RuvB family. Homohexamer. Forms an RuvA(8)-RuvB(12)-Holliday junction (HJ) complex. HJ DNA is sandwiched between 2 RuvA tetramers; dsDNA enters through RuvA and exits via RuvB. An RuvB hexamer assembles on each DNA strand where it exits the tetramer. Each RuvB hexamer is contacted by two RuvA subunits (via domain III) on 2 adjacent RuvB subunits; this complex drives branch migration. In the full resolvosome a probable DNA-RuvA(4)-RuvB(12)-RuvC(2) complex forms which resolves the HJ.

The protein resides in the cytoplasm. It carries out the reaction ATP + H2O = ADP + phosphate + H(+). Functionally, the RuvA-RuvB-RuvC complex processes Holliday junction (HJ) DNA during genetic recombination and DNA repair, while the RuvA-RuvB complex plays an important role in the rescue of blocked DNA replication forks via replication fork reversal (RFR). RuvA specifically binds to HJ cruciform DNA, conferring on it an open structure. The RuvB hexamer acts as an ATP-dependent pump, pulling dsDNA into and through the RuvAB complex. RuvB forms 2 homohexamers on either side of HJ DNA bound by 1 or 2 RuvA tetramers; 4 subunits per hexamer contact DNA at a time. Coordinated motions by a converter formed by DNA-disengaged RuvB subunits stimulates ATP hydrolysis and nucleotide exchange. Immobilization of the converter enables RuvB to convert the ATP-contained energy into a lever motion, pulling 2 nucleotides of DNA out of the RuvA tetramer per ATP hydrolyzed, thus driving DNA branch migration. The RuvB motors rotate together with the DNA substrate, which together with the progressing nucleotide cycle form the mechanistic basis for DNA recombination by continuous HJ branch migration. Branch migration allows RuvC to scan DNA until it finds its consensus sequence, where it cleaves and resolves cruciform DNA. The polypeptide is Holliday junction branch migration complex subunit RuvB (Clostridium perfringens (strain ATCC 13124 / DSM 756 / JCM 1290 / NCIMB 6125 / NCTC 8237 / Type A)).